We begin with the raw amino-acid sequence, 265 residues long: Mlc titration factor A (265 aa).

Zn(2+) is bound by residues histidine 111, histidine 148, histidine 152, and glutamate 211.

The protein belongs to the MtfA family. Interacts with Mlc. Zn(2+) is required as a cofactor.

The protein resides in the cytoplasm. Involved in the modulation of the activity of the glucose-phosphotransferase system (glucose-PTS). Interacts with the transcriptional repressor Mlc, preventing its interaction with DNA and leading to the modulation of expression of genes regulated by Mlc, including ptsG, which encodes the PTS system glucose-specific EIICB component. Functionally, shows zinc-dependent metallopeptidase activity. The sequence is that of Mlc titration factor A from Salmonella typhi.